Consider the following 249-residue polypeptide: DNA repair protein RecO (249 aa).

It belongs to the RecO family.

Its function is as follows. Involved in DNA repair and RecF pathway recombination. This is DNA repair protein RecO from Desulforudis audaxviator (strain MP104C).